A 232-amino-acid chain; its full sequence is Ribonuclease 3 (232 aa).

Positions 5–134 (QTVLKNHFAI…FLGALLLDKD (130 aa)) constitute an RNase III domain. Glutamate 47 is a Mg(2+) binding site. The active site involves aspartate 51. 2 residues coordinate Mg(2+): aspartate 120 and glutamate 123. Glutamate 123 is an active-site residue. The 70-residue stretch at 160–229 (DYKTHLQELL…AKNAVEKGLD (70 aa)) folds into the DRBM domain.

This sequence belongs to the ribonuclease III family. As to quaternary structure, homodimer. Mg(2+) is required as a cofactor.

The protein resides in the cytoplasm. It catalyses the reaction Endonucleolytic cleavage to 5'-phosphomonoester.. Its function is as follows. Digests double-stranded RNA. Involved in the processing of primary rRNA transcript to yield the immediate precursors to the large and small rRNAs (23S and 16S). Processes some mRNAs, and tRNAs when they are encoded in the rRNA operon. Processes pre-crRNA and tracrRNA of type II CRISPR loci if present in the organism. This Streptococcus pneumoniae (strain Hungary19A-6) protein is Ribonuclease 3.